The following is a 94-amino-acid chain: MRIKPLGDRVVIKRLEAEEKTKSGIVLPGSAKEKPQEAEIVAVGPGGLVDGKEVRMEVKVGDKVLFSKYSGTEVKLDGEEYTILRQNDILAIVE.

It belongs to the GroES chaperonin family. In terms of assembly, heptamer of 7 subunits arranged in a ring. Interacts with the chaperonin GroEL.

Its subcellular location is the cytoplasm. Together with the chaperonin GroEL, plays an essential role in assisting protein folding. The GroEL-GroES system forms a nano-cage that allows encapsulation of the non-native substrate proteins and provides a physical environment optimized to promote and accelerate protein folding. GroES binds to the apical surface of the GroEL ring, thereby capping the opening of the GroEL channel. In Clostridium novyi (strain NT), this protein is Co-chaperonin GroES.